Here is a 785-residue protein sequence, read N- to C-terminus: Protein PHTF2 (785 aa).

Positions 46–191 constitute a PHTF domain; sequence IQCLIGAYDQ…VHCQIVSTRT (146 aa). A run of 2 helical transmembrane segments spans residues 136–156 and 164–184; these read VIFFWLLVLYLLQVAAIVLFC and IPLTEVIGPIWLMLLLGTVHC. 2 disordered regions span residues 190 to 239 and 304 to 401; these read RTPK…GTST and RPEE…PESE. Positions 200–209 are enriched in basic residues; that stretch reads GKRRRKLRKA. Over residues 210 to 219 the composition is skewed to basic and acidic residues; it reads AHLEVHREGD. Polar residues-rich tracts occupy residues 220 to 239 and 309 to 333; these read GSSTTDNTQEGAVQNHGTST and AWNTGTLRNGPSKDTQRTITNVSDE. Asn329 is a glycosylation site (N-linked (GlcNAc...) asparagine). Residues 359–369 show a composition bias toward basic residues; it reads RNRKSHHYKKH. Residues 378 to 390 are compositionally biased toward low complexity; the sequence is SGTSCSSRCSSSR. A compositionally biased stretch (basic and acidic residues) spans 391 to 400; the sequence is QDSESARPES. Transmembrane regions (helical) follow at residues 497 to 517, 553 to 573, 634 to 654, and 668 to 688; these read IGYQIFGNAVSLILGLTPFVF, VIISFVVRVSLVWIFFFLLCV, VIVSSAFLLTISVVFICCAQL, and WELVIWCISLTLFLLRFVTLG. N-linked (GlcNAc...) asparagine glycosylation is found at Asn697 and Asn756. A helical transmembrane segment spans residues 760 to 780; it reads VVILSAVSGVISDLLGFNLKL.

Its subcellular location is the membrane. This is Protein PHTF2 (PHTF2) from Homo sapiens (Human).